Consider the following 191-residue polypeptide: Fe/S biogenesis protein NfuA (191 aa).

Positions 149 and 152 each coordinate [4Fe-4S] cluster.

This sequence belongs to the NfuA family. As to quaternary structure, homodimer. Requires [4Fe-4S] cluster as cofactor.

Its function is as follows. Involved in iron-sulfur cluster biogenesis. Binds a 4Fe-4S cluster, can transfer this cluster to apoproteins, and thereby intervenes in the maturation of Fe/S proteins. Could also act as a scaffold/chaperone for damaged Fe/S proteins. The protein is Fe/S biogenesis protein NfuA of Citrobacter koseri (strain ATCC BAA-895 / CDC 4225-83 / SGSC4696).